Consider the following 259-residue polypeptide: tRNA (guanine-N(1)-)-methyltransferase (259 aa).

S-adenosyl-L-methionine-binding positions include glycine 117 and 137–142 (LGDFVL).

This sequence belongs to the RNA methyltransferase TrmD family. In terms of assembly, homodimer.

It localises to the cytoplasm. It catalyses the reaction guanosine(37) in tRNA + S-adenosyl-L-methionine = N(1)-methylguanosine(37) in tRNA + S-adenosyl-L-homocysteine + H(+). Its function is as follows. Specifically methylates guanosine-37 in various tRNAs. The protein is tRNA (guanine-N(1)-)-methyltransferase of Polaromonas sp. (strain JS666 / ATCC BAA-500).